Reading from the N-terminus, the 59-residue chain is Large ribosomal subunit protein bL32 (59 aa).

Basic residues predominate over residues methionine 1–arginine 16. The segment at methionine 1–aspartate 20 is disordered.

The protein belongs to the bacterial ribosomal protein bL32 family.

In Sphingopyxis alaskensis (strain DSM 13593 / LMG 18877 / RB2256) (Sphingomonas alaskensis), this protein is Large ribosomal subunit protein bL32.